A 104-amino-acid chain; its full sequence is NADH-quinone oxidoreductase subunit K (104 aa).

3 helical membrane passes run 4 to 24 (VPASAYLTLAIILFCIGLFGA), 31 to 51 (VIVLVCIELMLNAANLNLVAF), and 67 to 87 (LFTMAVAAAEAALGLAILIAL).

This sequence belongs to the complex I subunit 4L family. As to quaternary structure, NDH-1 is composed of 14 different subunits. Subunits NuoA, H, J, K, L, M, N constitute the membrane sector of the complex.

Its subcellular location is the cell membrane. It carries out the reaction a quinone + NADH + 5 H(+)(in) = a quinol + NAD(+) + 4 H(+)(out). NDH-1 shuttles electrons from NADH, via FMN and iron-sulfur (Fe-S) centers, to quinones in the respiratory chain. The immediate electron acceptor for the enzyme in this species is believed to be a menaquinone. Couples the redox reaction to proton translocation (for every two electrons transferred, four hydrogen ions are translocated across the cytoplasmic membrane), and thus conserves the redox energy in a proton gradient. This chain is NADH-quinone oxidoreductase subunit K, found in Bacillus cereus (strain ATCC 14579 / DSM 31 / CCUG 7414 / JCM 2152 / NBRC 15305 / NCIMB 9373 / NCTC 2599 / NRRL B-3711).